A 902-amino-acid chain; its full sequence is Probable leucine--tRNA ligase, mitochondrial (902 aa).

K67 is subject to N6-acetyllysine. The 'HIGH' region signature appears at 91 to 101 (YPSGKLHMGHV). An N6-acetyllysine modification is found at K235. The 'KMSKS' region signature appears at 638–642 (KMSKS). K641 serves as a coordination point for ATP.

The protein belongs to the class-I aminoacyl-tRNA synthetase family.

Its subcellular location is the mitochondrion matrix. It catalyses the reaction tRNA(Leu) + L-leucine + ATP = L-leucyl-tRNA(Leu) + AMP + diphosphate. The protein is Probable leucine--tRNA ligase, mitochondrial (Lars2) of Mus musculus (Mouse).